Consider the following 412-residue polypeptide: WW domain-containing oxidoreductase (412 aa).

A disordered region spans residues 1–24 (MAALKYAGMEDTDSEDELPPGWEE). The WW 1 domain occupies 16-49 (DELPPGWEERSTKDGWVYYANHEEMKTQWEHPKT). The Nuclear localization signal signature appears at 50 to 55 (GKKKRC). In terms of domain architecture, WW 2 spans 57 to 90 (GALPYGWEQETDDKGQIFYVDHINKRKTYFDPRQ). 128–134 (GANSGIG) contributes to the NADP(+) binding site. S257 is a binding site for substrate. The Proton acceptor role is filled by Y290.

This sequence belongs to the short-chain dehydrogenases/reductases (SDR) family.

It is found in the cytoplasm. The protein resides in the mitochondrion. It localises to the golgi apparatus. The protein localises to the lysosome. Putative oxidoreductase. Acts as a tumor suppressor and plays a role in apoptosis. May function synergistically with p53/TP53 to control genotoxic stress-induced cell death. Plays a role in TGFB1 signaling and TGFB1-mediated cell death. May also play a role in tumor necrosis factor (TNF)-mediated cell death. Required for normal bone development. Inhibits Wnt signaling. The sequence is that of WW domain-containing oxidoreductase (wwox) from Danio rerio (Zebrafish).